Here is a 233-residue protein sequence, read N- to C-terminus: Sugar fermentation stimulation protein homolog (233 aa).

It belongs to the SfsA family.

The chain is Sugar fermentation stimulation protein homolog from Pyrobaculum neutrophilum (strain DSM 2338 / JCM 9278 / NBRC 100436 / V24Sta) (Thermoproteus neutrophilus).